We begin with the raw amino-acid sequence, 277 residues long: MNKKSIWSKTAFGSLFLLLGTAFTACSNYDFQANLTSLNQLRTSANKDINLTQDKNTLIDALKTAFENNSEGTTKVLLDAWKFSLYDAKILEKQDPVKFVKAFGSGKSKEDIEPSAGVRGLRFVERFGDNTASLIKNAILLDQQKVEVFNIRFKSSRDFTIQIKLNAKGNYKKSEVEKYKSQIGVQDNELGDKEEGTLEADLIFTYTPPASNLFSKSNFDKLTKSINFNTNLKLEMVGKDEVMRKILNSSAFTNNLASVNYPNQAVNLLPYVLYSIL.

Residues methionine 1–alanine 25 form the signal peptide. Cysteine 26 is lipidated: N-palmitoyl cysteine. The S-diacylglycerol cysteine moiety is linked to residue cysteine 26.

The protein belongs to the MG439/MG440 family.

The protein resides in the cell membrane. This is an uncharacterized protein from Mycoplasma pneumoniae (strain ATCC 29342 / M129 / Subtype 1) (Mycoplasmoides pneumoniae).